We begin with the raw amino-acid sequence, 215 residues long: Vesicle-trafficking protein SEC22b (215 aa).

Residues 1–190 (MVLLTMIARV…RQDAKYLNMR (190 aa)) are Cytoplasmic-facing. A Longin domain is found at 6–119 (MIARVADGLP…YSFIEFDNYI (114 aa)). A v-SNARE coiled-coil homology domain is found at 134 to 194 (NLSSVNTELQ…KYLNMRSTYA (61 aa)). The chain crosses the membrane as a helical span at residues 191 to 213 (STYAKLAAVAVFSVMLIVYIRFW). Residues 214 to 215 (WL) are Lumenal-facing.

It belongs to the synaptobrevin family. As to quaternary structure, component of 2 distinct SNARE complexes.

Its subcellular location is the endoplasmic reticulum membrane. It is found in the endoplasmic reticulum-Golgi intermediate compartment membrane. The protein localises to the golgi apparatus. It localises to the cis-Golgi network membrane. The protein resides in the trans-Golgi network membrane. Its subcellular location is the melanosome. Its function is as follows. SNARE involved in targeting and fusion of ER-derived transport vesicles with the Golgi complex as well as Golgi-derived retrograde transport vesicles with the ER. The protein is Vesicle-trafficking protein SEC22b of Xenopus tropicalis (Western clawed frog).